The following is a 173-amino-acid chain: Zinc finger A20 and AN1 domain-containing stress-associated protein 2 (173 aa).

The A20-type zinc-finger motif lies at 12 to 46; the sequence is PEGPKLCTNNCGFFGSAATMNMCSKCHKDMLFQQE. 12 residues coordinate Zn(2+): C18, C22, C34, C37, C114, C117, C128, C130, C135, H138, H144, and C146. The AN1-type zinc finger occupies 108-154; sequence PKGPSRCTTCNKRVGLTGFKCRCGSLFCGTHRYADVHDCSFNYHAAA.

In terms of biological role, may be involved in environmental stress response. The sequence is that of Zinc finger A20 and AN1 domain-containing stress-associated protein 2 (SAP2) from Arabidopsis thaliana (Mouse-ear cress).